A 715-amino-acid polypeptide reads, in one-letter code: 1,4-alpha-glucan branching enzyme GlgB (715 aa).

D396 (nucleophile) is an active-site residue. E449 acts as the Proton donor in catalysis.

It belongs to the glycosyl hydrolase 13 family. GlgB subfamily. As to quaternary structure, monomer.

It catalyses the reaction Transfers a segment of a (1-&gt;4)-alpha-D-glucan chain to a primary hydroxy group in a similar glucan chain.. The protein operates within glycan biosynthesis; glycogen biosynthesis. Functionally, catalyzes the formation of the alpha-1,6-glucosidic linkages in glycogen by scission of a 1,4-alpha-linked oligosaccharide from growing alpha-1,4-glucan chains and the subsequent attachment of the oligosaccharide to the alpha-1,6 position. In Aliivibrio fischeri (strain ATCC 700601 / ES114) (Vibrio fischeri), this protein is 1,4-alpha-glucan branching enzyme GlgB.